Consider the following 508-residue polypeptide: Citrate lyase alpha chain (508 aa).

Oligomer with a subunit composition of (alpha,beta,gamma)6.

It localises to the cytoplasm. The catalysed reaction is citrate = oxaloacetate + acetate. It carries out the reaction citrate + acetyl-CoA = (3S)-citryl-CoA + acetate. Its function is as follows. Represents a citrate:acetyl-ACP transferase. The chain is Citrate lyase alpha chain (citF) from Klebsiella pneumoniae.